The sequence spans 223 residues: Ubiquitin carboxyl-terminal hydrolase isozyme L1 (223 aa).

M1 is modified (N-acetylmethionine). A UCH catalytic domain is found at 2 to 221 (QLKPMEINPE…VRFSAVALCK (220 aa)). Positions 5 to 10 (PMEINP) are interaction with ubiquitin. C90 functions as the Nucleophile in the catalytic mechanism. S125 carries the phosphoserine modification. The active-site Proton donor is H161. The segment at 211-216 (EVRFSA) is interaction with ubiquitin. C220 carries the S-farnesyl cysteine lipid modification. Positions 221 to 223 (KCA) are cleaved as a propeptide — removed in mature form.

It belongs to the peptidase C12 family. As to quaternary structure, monomer. Homodimer. Interacts with COPS5 and SNCA. In terms of processing, O-glycosylated.

It is found in the cytoplasm. The protein localises to the endoplasmic reticulum membrane. The enzyme catalyses Thiol-dependent hydrolysis of ester, thioester, amide, peptide and isopeptide bonds formed by the C-terminal Gly of ubiquitin (a 76-residue protein attached to proteins as an intracellular targeting signal).. In terms of biological role, ubiquitin-protein hydrolase involved both in the processing of ubiquitin precursors and of ubiquitinated proteins. This enzyme is a thiol protease that recognizes and hydrolyzes a peptide bond at the C-terminal glycine of ubiquitin. Also binds to free monoubiquitin and may prevent its degradation in lysosomes. The homodimer may have ATP-independent ubiquitin ligase activity. The chain is Ubiquitin carboxyl-terminal hydrolase isozyme L1 (UCHL1) from Monodelphis domestica (Gray short-tailed opossum).